A 1587-amino-acid polypeptide reads, in one-letter code: Pentafunctional AROM polypeptide (1587 aa).

Positions 1–384 (MIEPTKISIL…YEPRASVVAN (384 aa)) are 3-dehydroquinate synthase. NAD(+) contacts are provided by residues 44-46 (DTN), 81-84 (EVSK), 114-116 (GGV), and aspartate 119. 7-phospho-2-dehydro-3-deoxy-D-arabino-heptonate is bound at residue arginine 130. 139–140 (TT) serves as a coordination point for NAD(+). 2 residues coordinate 7-phospho-2-dehydro-3-deoxy-D-arabino-heptonate: aspartate 146 and lysine 152. Lysine 161 provides a ligand contact to NAD(+). A 7-phospho-2-dehydro-3-deoxy-D-arabino-heptonate-binding site is contributed by asparagine 162. NAD(+)-binding positions include 179-182 (FLET) and asparagine 190. Glutamate 194 provides a ligand contact to Zn(2+). 7-phospho-2-dehydro-3-deoxy-D-arabino-heptonate is bound by residues 194–197 (EVIK) and lysine 250. The active-site Proton acceptor; for 3-dehydroquinate synthase activity is the glutamate 260. 7-phospho-2-dehydro-3-deoxy-D-arabino-heptonate contacts are provided by residues 264-268 (RNLLN) and histidine 271. Histidine 271 lines the Zn(2+) pocket. Catalysis depends on histidine 275, which acts as the Proton acceptor; for 3-dehydroquinate synthase activity. 7-phospho-2-dehydro-3-deoxy-D-arabino-heptonate is bound by residues histidine 287 and lysine 356. Histidine 287 serves as a coordination point for Zn(2+). Residues 397–842 (VFPGVSPKST…WDTLRLKFAV (446 aa)) form an EPSP synthase region. Residue cysteine 824 is the For EPSP synthase activity of the active site. Positions 864–1055 (SASVFIIGMR…KKKQHSFFVS (192 aa)) are shikimate kinase. 871 to 878 (GMRGAGKT) contributes to the ATP binding site. The 3-dehydroquinase stretch occupies residues 1056–1276 (LTLPDLRPAG…AAPGQLSATE (221 aa)). The active-site Proton acceptor; for 3-dehydroquinate dehydratase activity is histidine 1179. The active-site Schiff-base intermediate with substrate; for 3-dehydroquinate dehydratase activity is lysine 1207. The tract at residues 1289–1587 (KKRFALFGTP…RDAVLGTKAD (299 aa)) is shikimate dehydrogenase.

The protein in the N-terminal section; belongs to the sugar phosphate cyclases superfamily. Dehydroquinate synthase family. It in the 2nd section; belongs to the EPSP synthase family. In the 3rd section; belongs to the shikimate kinase family. This sequence in the 4th section; belongs to the type-I 3-dehydroquinase family. The protein in the C-terminal section; belongs to the shikimate dehydrogenase family. In terms of assembly, homodimer. The cofactor is Zn(2+).

It localises to the cytoplasm. It carries out the reaction 7-phospho-2-dehydro-3-deoxy-D-arabino-heptonate = 3-dehydroquinate + phosphate. The enzyme catalyses 3-dehydroquinate = 3-dehydroshikimate + H2O. The catalysed reaction is shikimate + NADP(+) = 3-dehydroshikimate + NADPH + H(+). It catalyses the reaction shikimate + ATP = 3-phosphoshikimate + ADP + H(+). It carries out the reaction 3-phosphoshikimate + phosphoenolpyruvate = 5-O-(1-carboxyvinyl)-3-phosphoshikimate + phosphate. It functions in the pathway metabolic intermediate biosynthesis; chorismate biosynthesis; chorismate from D-erythrose 4-phosphate and phosphoenolpyruvate: step 2/7. Its pathway is metabolic intermediate biosynthesis; chorismate biosynthesis; chorismate from D-erythrose 4-phosphate and phosphoenolpyruvate: step 3/7. The protein operates within metabolic intermediate biosynthesis; chorismate biosynthesis; chorismate from D-erythrose 4-phosphate and phosphoenolpyruvate: step 4/7. It participates in metabolic intermediate biosynthesis; chorismate biosynthesis; chorismate from D-erythrose 4-phosphate and phosphoenolpyruvate: step 5/7. It functions in the pathway metabolic intermediate biosynthesis; chorismate biosynthesis; chorismate from D-erythrose 4-phosphate and phosphoenolpyruvate: step 6/7. In terms of biological role, the AROM polypeptide catalyzes 5 consecutive enzymatic reactions in prechorismate polyaromatic amino acid biosynthesis. This is Pentafunctional AROM polypeptide from Aspergillus clavatus (strain ATCC 1007 / CBS 513.65 / DSM 816 / NCTC 3887 / NRRL 1 / QM 1276 / 107).